Here is a 268-residue protein sequence, read N- to C-terminus: ELL-associated factor 1 (268 aa).

Residues 106 to 268 form a disordered region; sequence IQVKKTRAEG…LSESGSDSDD (163 aa). Residues 128–154 are compositionally biased toward pro residues; that stretch reads ARPPQPSQPPPPPPPMPFRAPTKPPAG. S165 bears the Phosphoserine mark. Basic and acidic residues predominate over residues 171 to 181; the sequence is DDIKRELRAEV. Positions 182–262 are necessary for transactivation activity; that stretch reads DIIEQMSSSS…LRNDLQLSES (81 aa). A compositionally biased stretch (low complexity) spans 188-203; that stretch reads SSSSGSSSSDSESSSG. Residues 238-268 are compositionally biased toward polar residues; that stretch reads NGTSRPQGSSQLMNTLRNDLQLSESGSDSDD.

Belongs to the EAF family. In terms of assembly, component of the super elongation complex (SEC), at least composed of EAF1, EAF2, CDK9, MLLT3/AF9, AFF (AFF1 or AFF4), the P-TEFb complex and ELL (ELL, ELL2 or ELL3). Interacts with ELL and ELL2.

It localises to the nucleus speckle. The protein localises to the nucleus. The protein resides in the cajal body. Acts as a transcriptional transactivator of ELL and ELL2 elongation activities. The polypeptide is ELL-associated factor 1 (Eaf1) (Mus musculus (Mouse)).